A 75-amino-acid chain; its full sequence is Dermaseptin-S11 (75 aa).

Residues 1 to 22 form the signal peptide; it reads MAFLKKSLFLVLFLGMVSLSIC. Residues 23 to 45 constitute a propeptide that is removed on maturation; that stretch reads EEEKRENEDEEEQEDDEQSEEKR. The disordered stretch occupies residues 25 to 44; that stretch reads EKRENEDEEEQEDDEQSEEK. Over residues 30–41 the composition is skewed to acidic residues; that stretch reads EDEEEQEDDEQS.

This sequence belongs to the frog skin active peptide (FSAP) family. Dermaseptin subfamily. Expressed by the skin glands.

It is found in the secreted. Its subcellular location is the target cell membrane. Antimicrobial peptide with activity against Gram-positive and Gram-negative bacteria, and fungi. Has hemolytic activity. In Phyllomedusa sauvagei (Sauvage's leaf frog), this protein is Dermaseptin-S11.